The sequence spans 115 residues: SPbeta prophage-derived uncharacterized membrane protein YosE (115 aa).

The next 3 membrane-spanning stretches (helical) occupy residues 20-42, 58-78, and 95-115; these read IVVG…YGLN, VHVT…FVKG, and GKSL…TLFI.

The protein localises to the cell membrane. In Bacillus subtilis (strain 168), this protein is SPbeta prophage-derived uncharacterized membrane protein YosE (yosE).